A 188-amino-acid polypeptide reads, in one-letter code: Methylamine dehydrogenase light chain (188 aa).

A signal peptide (tat-type signal) is located at residues 1–57 (MLGNFRFDDMVEKLSRRVAGRTSRRGAIGRLGTVLAGAALVPLLPVDRRGRVSRANA). Disulfide bonds link C80–C145, C86–C118, C93–C178, C95–C143, C103–C134, and C135–C166. W114 is modified (tryptophylquinone). Positions 114-165 (WVASCYNPTDGQSYLIAYRDCCGYNVSGRCPCLNTEGELPVYRPEFANDIIW) form a cross-link, tryptophan tryptophylquinone (Trp-Trp).

This sequence belongs to the aromatic amine dehydrogenase light chain family. As to quaternary structure, heterotetramer of two light and two heavy chains. Tryptophan tryptophylquinone residue serves as cofactor. In terms of processing, predicted to be exported by the Tat system. The position of the signal peptide cleavage has been experimentally proven. Tryptophan tryptophylquinone (TTQ) is formed by oxidation of the indole ring of a tryptophan to form tryptophylquinone followed by covalent cross-linking with another tryptophan residue.

It is found in the periplasm. The catalysed reaction is 2 oxidized [amicyanin] + methylamine + H2O = 2 reduced [amicyanin] + formaldehyde + NH4(+) + 2 H(+). It functions in the pathway one-carbon metabolism; methylamine degradation; formaldehyde from methylamine: step 1/1. Methylamine dehydrogenase carries out the oxidation of methylamine. Electrons are passed from methylamine dehydrogenase to amicyanin. This Paracoccus versutus (Thiobacillus versutus) protein is Methylamine dehydrogenase light chain (mauA).